The chain runs to 365 residues: Snurportin-1 (365 aa).

The 63-residue stretch at 10–72 folds into the IBB domain; sequence GGVALAAPNS…RLAEGDWAGV (63 aa). 2 disordered regions span residues 15–34 and 69–90; these read AAPN…KGRG and WAGV…EMEV. Residues 73 to 90 show a composition bias toward acidic residues; sequence ESDEDGGEDGDGEEEMEV. Residues 129 to 131 are interaction with m3G-cap structure; the sequence is GKR. The necessary for binding to the m3G-cap structure stretch occupies residues 211 to 333; the sequence is LSSKIQEEEG…GKAQPSAEAA (123 aa). Residues 317-365 are disordered; that stretch reads RSKKLAAGKAQPSAEAAARNGHYELEHLSTPQPANSAQGQEEAGSQMEN. The segment covering 345–355 has biased composition (polar residues); that stretch reads STPQPANSAQG.

The protein belongs to the snurportin family.

The protein localises to the nucleus. It is found in the cytoplasm. Functionally, functions as an U snRNP-specific nuclear import adapter. Involved in the trimethylguanosine (m3G)-cap-dependent nuclear import of U snRNPs. Binds specifically to the terminal m3G-cap U snRNAs. In Gallus gallus (Chicken), this protein is Snurportin-1 (SNUPN).